The following is a 500-amino-acid chain: MKAFKQKQVWFVTGSQDLYGPKVLEQVAKNSEQIVHGFNQSDAISMEVVYKPTVKSPREIYAVCQAANSDENCVGVILWMHTFSPAKMWIAGLNELSKPFMHLHTQFNAELPWADINMNYMNTHQSAHGCREFGYIGTRMRKERKVVVGHWQTNDVQAQVDDWCRAAAGWNESQNLRIARFGDNMRQVAVTEGDKVAAQIQFGYEVHAYSLGELNDAINAVADNDITAQIDRYASEYVISNELFNDEYQLDRLRKEAQIELGLTQFLKDGEFGAFTNCFENLTGMTGLPGLATQRLMANGIGYGGEGDWKTAAMVRIMKVMGQGRTGGTSFMEDYTYNFGVTDQVLGAHMLEVCPSIAAAKPRLEVHRHTIGVRCDVPRLLFTGKAGPAINVSTIDLGNRFRIILNELDTVTPPQELPNLPVASALWEPRPNLSIAAAAWIHAGGAHHSAYSQAISTDNIVDFAEMAGAELVIIDADTRIRQFKNELRQNSVYYGLARGL.

Residues E306, E333, H349, and H448 each contribute to the Mn(2+) site.

Belongs to the arabinose isomerase family. It depends on Mn(2+) as a cofactor.

It catalyses the reaction beta-L-arabinopyranose = L-ribulose. It participates in carbohydrate degradation; L-arabinose degradation via L-ribulose; D-xylulose 5-phosphate from L-arabinose (bacterial route): step 1/3. Functionally, catalyzes the conversion of L-arabinose to L-ribulose. The polypeptide is L-arabinose isomerase (Shewanella baltica (strain OS223)).